Here is a 181-residue protein sequence, read N- to C-terminus: UPF0232 protein MAP_0004 (181 aa).

The segment covering 1–11 has biased composition (polar residues); that stretch reads MSDDQSPSPSG. Disordered stretches follow at residues 1–70 and 161–181; these read MSDD…PQPL and APSW…DTYG. Residues 18–39 are compositionally biased toward basic and acidic residues; it reads LVRRTLEEARAAARAQGKDAGR. A compositionally biased stretch (low complexity) spans 40-50; that stretch reads GRAAAPTPRRV.

This sequence belongs to the UPF0232 family.

This is UPF0232 protein MAP_0004 from Mycolicibacterium paratuberculosis (strain ATCC BAA-968 / K-10) (Mycobacterium paratuberculosis).